A 1417-amino-acid polypeptide reads, in one-letter code: DNA-directed RNA polymerase subunit beta' (1417 aa).

Residues cysteine 71, cysteine 73, cysteine 86, and cysteine 89 each contribute to the Zn(2+) site. Positions 461, 463, and 465 each coordinate Mg(2+). Positions 815, 889, 896, and 899 each coordinate Zn(2+).

The protein belongs to the RNA polymerase beta' chain family. As to quaternary structure, the RNAP catalytic core consists of 2 alpha, 1 beta, 1 beta' and 1 omega subunit. When a sigma factor is associated with the core the holoenzyme is formed, which can initiate transcription. Requires Mg(2+) as cofactor. The cofactor is Zn(2+).

The catalysed reaction is RNA(n) + a ribonucleoside 5'-triphosphate = RNA(n+1) + diphosphate. Functionally, DNA-dependent RNA polymerase catalyzes the transcription of DNA into RNA using the four ribonucleoside triphosphates as substrates. This chain is DNA-directed RNA polymerase subunit beta', found in Pasteurella multocida (strain Pm70).